The following is a 116-amino-acid chain: Small ribosomal subunit protein bS16 (116 aa).

The protein belongs to the bacterial ribosomal protein bS16 family.

This is Small ribosomal subunit protein bS16 from Chlamydia trachomatis serovar A (strain ATCC VR-571B / DSM 19440 / HAR-13).